The following is a 585-amino-acid chain: Arginine--tRNA ligase (585 aa).

Residues 130–140 carry the 'HIGH' region motif; that stretch reads ANPTGPMHVGH.

The protein belongs to the class-I aminoacyl-tRNA synthetase family. Monomer.

The protein resides in the cytoplasm. The enzyme catalyses tRNA(Arg) + L-arginine + ATP = L-arginyl-tRNA(Arg) + AMP + diphosphate. The chain is Arginine--tRNA ligase from Methylorubrum extorquens (strain CM4 / NCIMB 13688) (Methylobacterium extorquens).